The primary structure comprises 253 residues: Small ribosomal subunit protein cS22 (253 aa).

The N-terminal 56 residues, 1–56 (MATFLTNVVSIKPTIFSFQSESFTPLHTRVNVFSSKPFPSLAGTFSRSSRTRFIPY), are a transit peptide targeting the chloroplast. 2 consecutive RRM domains span residues 76–154 (RRVY…ITEK) and 177–253 (YKVY…VNKA).

This sequence belongs to the chloroplast-specific ribosomal protein cS22 family. Component of the chloroplast small ribosomal subunit (SSU). Mature 70S chloroplast ribosomes of higher plants consist of a small (30S) and a large (50S) subunit. The 30S small subunit contains 1 molecule of ribosomal RNA (16S rRNA) and 24 different proteins. The 50S large subunit contains 3 rRNA molecules (23S, 5S and 4.5S rRNA) and 33 different proteins. Expressed constitutively in roots, stems, flower buds, flowers and leaves.

The protein localises to the plastid. It is found in the chloroplast. In terms of biological role, component of the chloroplast ribosome (chloro-ribosome), a dedicated translation machinery responsible for the synthesis of chloroplast genome-encoded proteins, including proteins of the transcription and translation machinery and components of the photosynthetic apparatus. May have a role in the recruitment of stored chloroplast mRNAs for active protein synthesis. Bind single strand DNA (ssDNA) and RNA in vitro. Exhibits RNA chaperone activity. Negatively regulates resistance responses to abiotic stresses during seed germination (e.g. salt, dehydration, and low temperature) and seedling growth (e.g. salt). This Arabidopsis thaliana (Mouse-ear cress) protein is Small ribosomal subunit protein cS22.